Reading from the N-terminus, the 413-residue chain is Calmodulin-binding protein CmbB (413 aa).

FNIP repeat units lie at residues 104–148 (FNHP…LSDC), 149–192 (YNQA…LGKG), 222–257 (SLPP…FGDG), 258–301 (FNQP…FHQF), 304–343 (FSQT…FSEK), and 344–386 (YNHP…LNGY).

In terms of assembly, interacts with calmodulin in the presence of Ca(2+).

This is Calmodulin-binding protein CmbB from Dictyostelium discoideum (Social amoeba).